The chain runs to 178 residues: Ribosome maturation factor RimM (178 aa).

A PRC barrel domain is found at 100 to 178 (AADEYYWYQL…VMRVEWDADF (79 aa)).

This sequence belongs to the RimM family. In terms of assembly, binds ribosomal protein uS19.

The protein localises to the cytoplasm. In terms of biological role, an accessory protein needed during the final step in the assembly of 30S ribosomal subunit, possibly for assembly of the head region. Essential for efficient processing of 16S rRNA. May be needed both before and after RbfA during the maturation of 16S rRNA. It has affinity for free ribosomal 30S subunits but not for 70S ribosomes. The polypeptide is Ribosome maturation factor RimM (Pseudomonas putida (strain W619)).